The sequence spans 136 residues: Protein NrdI (136 aa).

The protein belongs to the NrdI family.

Functionally, probably involved in ribonucleotide reductase function. In Shigella dysenteriae serotype 1 (strain Sd197), this protein is Protein NrdI.